A 264-amino-acid polypeptide reads, in one-letter code: JmjC domain-containing protein 8 (264 aa).

The N-terminal stretch at 1 to 23 (MAPASRLLALWALAAVALPGSGA) is a signal peptide. Residues Asn130, Asn140, and Asn209 are each glycosylated (N-linked (GlcNAc...) asparagine). The region spanning 131-264 (DTLYFFGDNN…TSVFISTFLG (134 aa)) is the JmjC domain.

In terms of assembly, oligomer. Dimer. Interacts with PKM; regulates angiogenesis and metabolism. In terms of processing, N-glycosylated.

Its subcellular location is the endoplasmic reticulum lumen. It localises to the cytoplasm. In terms of biological role, functions as a positive regulator of TNF-induced NF-kappa-B signaling. Regulates angiogenesis and cellular metabolism through interaction with PKM. This is JmjC domain-containing protein 8 from Homo sapiens (Human).